The chain runs to 200 residues: Pyrrolidone-carboxylate peptidase (200 aa).

Catalysis depends on residues E78, C141, and H165.

This sequence belongs to the peptidase C15 family. In terms of assembly, homotetramer.

Its subcellular location is the cytoplasm. The enzyme catalyses Release of an N-terminal pyroglutamyl group from a polypeptide, the second amino acid generally not being Pro.. Removes 5-oxoproline from various penultimate amino acid residues except L-proline. This chain is Pyrrolidone-carboxylate peptidase, found in Lactobacillus helveticus (strain DPC 4571).